A 143-amino-acid polypeptide reads, in one-letter code: uncharacterized protein (143 aa).

The N-terminal stretch at 1–32 (MITNLRRRTAMAAAGLGAALGLGILLVPTVDA) is a signal peptide.

To M.tuberculosis Rv1269c.

This is an uncharacterized protein from Mycobacterium tuberculosis (strain CDC 1551 / Oshkosh).